Here is a 208-residue protein sequence, read N- to C-terminus: NAD(P)H-quinone oxidoreductase subunit I (208 aa).

4Fe-4S ferredoxin-type domains lie at 55-84 and 95-124; these read GRIH…VDWV and RNYS…MTEE. 8 residues coordinate [4Fe-4S] cluster: Cys64, Cys67, Cys70, Cys74, Cys104, Cys107, Cys110, and Cys114.

The protein belongs to the complex I 23 kDa subunit family. NDH-1 is composed of at least 11 different subunits. It depends on [4Fe-4S] cluster as a cofactor.

It localises to the cellular thylakoid membrane. The enzyme catalyses a plastoquinone + NADH + (n+1) H(+)(in) = a plastoquinol + NAD(+) + n H(+)(out). It carries out the reaction a plastoquinone + NADPH + (n+1) H(+)(in) = a plastoquinol + NADP(+) + n H(+)(out). NDH-1 shuttles electrons from an unknown electron donor, via FMN and iron-sulfur (Fe-S) centers, to quinones in the respiratory and/or the photosynthetic chain. The immediate electron acceptor for the enzyme in this species is believed to be plastoquinone. Couples the redox reaction to proton translocation, and thus conserves the redox energy in a proton gradient. This Prochlorococcus marinus (strain MIT 9215) protein is NAD(P)H-quinone oxidoreductase subunit I.